Reading from the N-terminus, the 29-residue chain is Cytochrome b6-f complex subunit 8 (29 aa).

Residues 3–23 form a helical membrane-spanning segment; that stretch reads ILTLGWVSILALFTWSIAMVV.

This sequence belongs to the PetN family. The 4 large subunits of the cytochrome b6-f complex are cytochrome b6, subunit IV (17 kDa polypeptide, PetD), cytochrome f and the Rieske protein, while the 4 small subunits are PetG, PetL, PetM and PetN. The complex functions as a dimer.

It is found in the cellular thylakoid membrane. In terms of biological role, component of the cytochrome b6-f complex, which mediates electron transfer between photosystem II (PSII) and photosystem I (PSI), cyclic electron flow around PSI, and state transitions. The chain is Cytochrome b6-f complex subunit 8 from Microcystis aeruginosa (strain NIES-843 / IAM M-2473).